We begin with the raw amino-acid sequence, 82 residues long: MRLVACLVFLASFALVCQGQVYKGGYTRPIPRPPPFVRPLPGGPIGPYNGCPISCRGISFSQARSCCSRLGRCCHVGKGYSG.

The N-terminal stretch at 1–19 (MRLVACLVFLASFALVCQG) is a signal peptide. Gln20 carries the post-translational modification Pyrrolidone carboxylic acid. Disulfide bonds link Cys51–Cys66, Cys55–Cys73, and Cys67–Cys74. A Serine amide modification is found at Ser81.

The protein belongs to the penaeidin family.

It is found in the cytoplasmic granule. Functionally, antibacterial and antifungal activity. Presents chitin-binding activity. The sequence is that of Penaeidin-3f from Penaeus vannamei (Whiteleg shrimp).